We begin with the raw amino-acid sequence, 186 residues long: uncharacterized protein (186 aa).

Residues methionine 1 to alanine 21 form the signal peptide. Residues glutamate 22–lysine 142 are Extracellular-facing. 4 N-linked (GlcNAc...) asparagine glycosylation sites follow: asparagine 62, asparagine 75, asparagine 93, and asparagine 104. A helical membrane pass occupies residues leucine 143–phenylalanine 163. Residues alanine 164–histidine 186 lie on the Cytoplasmic side of the membrane.

The protein resides in the membrane. This is an uncharacterized protein from Schizosaccharomyces pombe (strain 972 / ATCC 24843) (Fission yeast).